Here is a 515-residue protein sequence, read N- to C-terminus: Histidine ammonia-lyase (515 aa).

The 5-imidazolinone (Ala-Gly) cross-link spans 145–147 (ASG). Residue Ser146 is modified to 2,3-didehydroalanine (Ser).

It belongs to the PAL/histidase family. In terms of processing, contains an active site 4-methylidene-imidazol-5-one (MIO), which is formed autocatalytically by cyclization and dehydration of residues Ala-Ser-Gly.

The protein localises to the cytoplasm. The catalysed reaction is L-histidine = trans-urocanate + NH4(+). Its pathway is amino-acid degradation; L-histidine degradation into L-glutamate; N-formimidoyl-L-glutamate from L-histidine: step 1/3. This chain is Histidine ammonia-lyase, found in Gluconobacter oxydans (strain 621H) (Gluconobacter suboxydans).